We begin with the raw amino-acid sequence, 560 residues long: MKKVLNKYSRRLTEDKSQGASQAMLYGTEMNDADMHKPQIGIGSVWYEGNTCNMHLNQLAQFVKDSVEKENLKGMRFNTIGVSDGISMGTDGMSYSLQSRDLIADSIETVMSAHWYDGLVSIPGCDKNMPGCMMALGRLNRPGFVIYGGTIQAGVMRGKPIDIVTAFQSYGACLSGQITEQERQETIKKACPGAGACGGMYTANTMACAIEALGMSLPFSSSTSATSVEKVQECDKAGETIKNLLELDIKPRDIMTRKAFENAMVLITVMGGSTNAVLHLLAMASSVDVDLSIDDFQEIANKTPVLADFKPSGKYVMANLHAIGGTPAVMKMLLKAGMLHGDCLTVTGKTLAENLENVADLPEDNTIIHKLDNPIKKTGHLQILKGNVAPEGSVAKITGKEGEIFEGVANVFDSEEEMVAAVETGKVKKGDVIVIRYEGPKGGPGMPEMLKPTSLIMGAGLGQDVALITDGRFSGGSHGFIVGHITPEAYEGGMIALLENGDKITIDAINNVINVDLSDQEIAQRKSKWRASKQKASRGTLKKYIKTVSSASTGCVTDLD.

C52 is a [2Fe-2S] cluster binding site. D84 contacts Mg(2+). C125 lines the [2Fe-2S] cluster pocket. Mg(2+) contacts are provided by D126 and K127. Residue K127 is modified to N6-carboxylysine. [2Fe-2S] cluster is bound at residue C197. E448 is a binding site for Mg(2+). The active-site Proton acceptor is the S474.

This sequence belongs to the IlvD/Edd family. As to quaternary structure, homodimer. [2Fe-2S] cluster serves as cofactor. The cofactor is Mg(2+).

The catalysed reaction is (2R)-2,3-dihydroxy-3-methylbutanoate = 3-methyl-2-oxobutanoate + H2O. The enzyme catalyses (2R,3R)-2,3-dihydroxy-3-methylpentanoate = (S)-3-methyl-2-oxopentanoate + H2O. It functions in the pathway amino-acid biosynthesis; L-isoleucine biosynthesis; L-isoleucine from 2-oxobutanoate: step 3/4. It participates in amino-acid biosynthesis; L-valine biosynthesis; L-valine from pyruvate: step 3/4. Its function is as follows. Functions in the biosynthesis of branched-chain amino acids. Catalyzes the dehydration of (2R,3R)-2,3-dihydroxy-3-methylpentanoate (2,3-dihydroxy-3-methylvalerate) into 2-oxo-3-methylpentanoate (2-oxo-3-methylvalerate) and of (2R)-2,3-dihydroxy-3-methylbutanoate (2,3-dihydroxyisovalerate) into 2-oxo-3-methylbutanoate (2-oxoisovalerate), the penultimate precursor to L-isoleucine and L-valine, respectively. This chain is Dihydroxy-acid dehydratase, found in Francisella tularensis subsp. tularensis (strain WY96-3418).